The primary structure comprises 303 residues: N-acetyl-D-glucosamine kinase (303 aa).

ATP-binding positions include 4 to 11 and 133 to 140; these read GFDIGGTK and GVGGGLIF. Residues His157, Cys177, Cys179, and Cys184 each coordinate Zn(2+).

It belongs to the ROK (NagC/XylR) family. NagK subfamily.

The enzyme catalyses N-acetyl-D-glucosamine + ATP = N-acetyl-D-glucosamine 6-phosphate + ADP + H(+). It functions in the pathway cell wall biogenesis; peptidoglycan recycling. Functionally, catalyzes the phosphorylation of N-acetyl-D-glucosamine (GlcNAc) derived from cell-wall degradation, yielding GlcNAc-6-P. The sequence is that of N-acetyl-D-glucosamine kinase from Escherichia coli O127:H6 (strain E2348/69 / EPEC).